Consider the following 440-residue polypeptide: tRNA(Ile)-lysidine synthase (440 aa).

Residue 13 to 18 coordinates ATP; the sequence is SGGADS.

The protein belongs to the tRNA(Ile)-lysidine synthase family.

It localises to the cytoplasm. It catalyses the reaction cytidine(34) in tRNA(Ile2) + L-lysine + ATP = lysidine(34) in tRNA(Ile2) + AMP + diphosphate + H(+). Functionally, ligates lysine onto the cytidine present at position 34 of the AUA codon-specific tRNA(Ile) that contains the anticodon CAU, in an ATP-dependent manner. Cytidine is converted to lysidine, thus changing the amino acid specificity of the tRNA from methionine to isoleucine. This chain is tRNA(Ile)-lysidine synthase, found in Solibacter usitatus (strain Ellin6076).